Reading from the N-terminus, the 695-residue chain is uncharacterized protein (695 aa).

A Phosphoserine modification is found at Ser113. 12 helical membrane passes run 237–257 (FPLI…SLTV), 265–285 (LAAV…FEGI), 313–333 (IAFS…SEPL), 344–364 (INLT…YIFF), 380–400 (GIYV…TLVW), 408–428 (FIGA…LLLF), 457–477 (AFSG…LTLF), 488–508 (AQSA…AIGI), 531–551 (QVGL…LVFG), 565–585 (VIKL…FDSL), 604–624 (IVNL…LSWF), and 633–653 (WIGI…YVLF). A compositionally biased stretch (acidic residues) spans 673–688 (EVDSDEYLTDSDDPDE). A disordered region spans residues 673–695 (EVDSDEYLTDSDDPDENTALLGA).

This sequence belongs to the multi antimicrobial extrusion (MATE) (TC 2.A.66.1) family.

The protein localises to the membrane. This is an uncharacterized protein from Saccharomyces cerevisiae (strain ATCC 204508 / S288c) (Baker's yeast).